We begin with the raw amino-acid sequence, 286 residues long: Acetylglutamate kinase (286 aa).

Residues 63–64 (GG), Arg-85, and Asn-178 contribute to the substrate site.

This sequence belongs to the acetylglutamate kinase family. ArgB subfamily.

Its subcellular location is the cytoplasm. It catalyses the reaction N-acetyl-L-glutamate + ATP = N-acetyl-L-glutamyl 5-phosphate + ADP. The protein operates within amino-acid biosynthesis; L-arginine biosynthesis; N(2)-acetyl-L-ornithine from L-glutamate: step 2/4. Functionally, catalyzes the ATP-dependent phosphorylation of N-acetyl-L-glutamate. This chain is Acetylglutamate kinase, found in Clostridioides difficile (strain 630) (Peptoclostridium difficile).